A 491-amino-acid polypeptide reads, in one-letter code: Probable allantoate deiminase (491 aa).

The signal sequence occupies residues 1–32; it reads MALLLSYPRRHPSIHLLILSAYALFLLPILDG. Residue N109 is glycosylated (N-linked (GlcNAc...) asparagine). Positions 120, 131, 168, and 234 each coordinate Mn(2+). 2 N-linked (GlcNAc...) asparagine glycosylation sites follow: N265 and N343. Residue H454 coordinates Mn(2+).

It belongs to the peptidase M20A family. Homodimer. The cofactor is Mn(2+).

It is found in the endoplasmic reticulum. It catalyses the reaction allantoate + H2O + 2 H(+) = (S)-2-ureidoglycine + NH4(+) + CO2. Functionally, involved in the catabolism of purine nucleotides. The sequential activity of AAH, UGLYAH and UAH allows a complete purine breakdown without the intermediate generation of urea. The polypeptide is Probable allantoate deiminase (Oryza sativa subsp. japonica (Rice)).